We begin with the raw amino-acid sequence, 140 residues long: Small ribosomal subunit protein uS19 (140 aa).

The protein belongs to the universal ribosomal protein uS19 family.

Functionally, protein S19 forms a complex with S13 that binds strongly to the 16S ribosomal RNA. The polypeptide is Small ribosomal subunit protein uS19 (rps19) (Saccharolobus solfataricus (strain ATCC 35092 / DSM 1617 / JCM 11322 / P2) (Sulfolobus solfataricus)).